A 138-amino-acid polypeptide reads, in one-letter code: Ribosome-binding factor A (138 aa).

The segment at 116–138 is disordered; it reads VAQDSQHQEGPASPDAKPESTEE.

It belongs to the RbfA family. Monomer. Binds 30S ribosomal subunits, but not 50S ribosomal subunits or 70S ribosomes.

Its subcellular location is the cytoplasm. Functionally, one of several proteins that assist in the late maturation steps of the functional core of the 30S ribosomal subunit. Associates with free 30S ribosomal subunits (but not with 30S subunits that are part of 70S ribosomes or polysomes). Required for efficient processing of 16S rRNA. May interact with the 5'-terminal helix region of 16S rRNA. The chain is Ribosome-binding factor A from Pseudomonas syringae pv. tomato (strain ATCC BAA-871 / DC3000).